A 254-amino-acid chain; its full sequence is Type III pantothenate kinase (254 aa).

6–13 (DVGNTNTV) is a binding site for ATP. Substrate is bound by residues Tyr-100 and 107–110 (GADR). Asp-109 acts as the Proton acceptor in catalysis. Asp-129 contacts K(+). Thr-132 is a binding site for ATP. Residue Thr-184 participates in substrate binding.

Belongs to the type III pantothenate kinase family. As to quaternary structure, homodimer. Requires NH4(+) as cofactor. K(+) is required as a cofactor.

The protein localises to the cytoplasm. The enzyme catalyses (R)-pantothenate + ATP = (R)-4'-phosphopantothenate + ADP + H(+). It participates in cofactor biosynthesis; coenzyme A biosynthesis; CoA from (R)-pantothenate: step 1/5. Functionally, catalyzes the phosphorylation of pantothenate (Pan), the first step in CoA biosynthesis. The protein is Type III pantothenate kinase of Anaeromyxobacter sp. (strain Fw109-5).